We begin with the raw amino-acid sequence, 303 residues long: Putative ankyrin repeat protein R601 (303 aa).

ANK repeat units lie at residues Asp-86–Val-115, Asn-117–Val-146, Asp-147–Ser-176, and Asn-200–Tyr-233.

This Acanthamoeba polyphaga (Amoeba) protein is Putative ankyrin repeat protein R601.